The sequence spans 73 residues: Mu-sparatoxin-Hv2 (73 aa).

The N-terminal stretch at 1-20 is a signal peptide; sequence MKFAIVITLLLVAFSAVALA. A propeptide spanning residues 21 to 35 is cleaved from the precursor; it reads DKSIERAVMDLITAR. 3 disulfide bridges follow: C39/C53, C46/C58, and C52/C68. Residue F72 is modified to Phenylalanine amide.

It belongs to the neurotoxin 10 (Hwtx-1) family. In terms of tissue distribution, expressed by the venom gland.

The protein localises to the secreted. Its function is as follows. Insecticidal toxin that potently and irreversibly blocks voltage-gated sodium channels (Nav) in cockroach dorsal unpaired median (DUM) neurons (IC(50)=833.7 nM). It does not change both the steady-state activation and inactivation curves, suggesting it acts as a pore blocker (possibly at Nav site 1). Does not show toxicity when intraperitoneally injected into mouse. The polypeptide is Mu-sparatoxin-Hv2 (Heteropoda venatoria (Brown huntsman spider)).